We begin with the raw amino-acid sequence, 386 residues long: NifS-like protein (386 aa).

Pyridoxal 5'-phosphate contacts are provided by residues 58-59 (SE) and 184-186 (SIN).

The protein belongs to the class-V pyridoxal-phosphate-dependent aminotransferase family. NifS/IscS subfamily. Pyridoxal 5'-phosphate serves as cofactor.

It is found in the virion. This is NifS-like protein from Ornithodoros (relapsing fever ticks).